A 291-amino-acid chain; its full sequence is Small ribosomal subunit biogenesis GTPase RsgA (291 aa).

The region spanning 63–221 (HNELKRPPVS…IADTPGFSAL (159 aa)) is the CP-type G domain. Residues 112–115 (TKKD) and 164–172 (GQSGVGKST) each bind GTP. Residues Cys-245, Cys-250, His-252, and Cys-258 each coordinate Zn(2+).

The protein belongs to the TRAFAC class YlqF/YawG GTPase family. RsgA subfamily. Monomer. Associates with 30S ribosomal subunit, binds 16S rRNA. Zn(2+) serves as cofactor.

It is found in the cytoplasm. Its function is as follows. One of several proteins that assist in the late maturation steps of the functional core of the 30S ribosomal subunit. Helps release RbfA from mature subunits. May play a role in the assembly of ribosomal proteins into the subunit. Circularly permuted GTPase that catalyzes slow GTP hydrolysis, GTPase activity is stimulated by the 30S ribosomal subunit. In Staphylococcus haemolyticus (strain JCSC1435), this protein is Small ribosomal subunit biogenesis GTPase RsgA.